Here is a 261-residue protein sequence, read N- to C-terminus: Ribosomal RNA small subunit methyltransferase A (261 aa).

S-adenosyl-L-methionine is bound by residues asparagine 20, leucine 22, glycine 47, glutamate 68, aspartate 90, and asparagine 110.

This sequence belongs to the class I-like SAM-binding methyltransferase superfamily. rRNA adenine N(6)-methyltransferase family. RsmA subfamily.

The protein resides in the cytoplasm. The enzyme catalyses adenosine(1518)/adenosine(1519) in 16S rRNA + 4 S-adenosyl-L-methionine = N(6)-dimethyladenosine(1518)/N(6)-dimethyladenosine(1519) in 16S rRNA + 4 S-adenosyl-L-homocysteine + 4 H(+). In terms of biological role, specifically dimethylates two adjacent adenosines (A1518 and A1519) in the loop of a conserved hairpin near the 3'-end of 16S rRNA in the 30S particle. May play a critical role in biogenesis of 30S subunits. The sequence is that of Ribosomal RNA small subunit methyltransferase A from Prosthecochloris aestuarii (strain DSM 271 / SK 413).